A 391-amino-acid chain; its full sequence is Nucleosome assembly protein 1-like 1 (391 aa).

The segment covering 1 to 10 (MADIDNKEQS) has biased composition (basic and acidic residues). Positions 1–32 (MADIDNKEQSELDQDLDDVEEVEEEETGEETK) are disordered. Position 2 is an N-acetylalanine (alanine 2). At serine 10 the chain carries Phosphoserine. Acidic residues predominate over residues 11 to 28 (ELDQDLDDVEEVEEEETG). Residues threonine 62 and threonine 64 each carry the phosphothreonine modification. Serine 69 bears the Phosphoserine mark. An N6-acetyllysine modification is found at lysine 116. The NAP1L motif motif lies at 125–150 (YEPTEEECEWKPDEEDEISEELKEKA). Acidic residues predominate over residues 132–143 (CEWKPDEEDEIS). A disordered region spans residues 132–163 (CEWKPDEEDEISEELKEKAKIEDEKKDEEKED). Serine 143 is modified (phosphoserine). The segment covering 144 to 163 (EELKEKAKIEDEKKDEEKED) has biased composition (basic and acidic residues). Residues 273-279 (IKKKQKH) carry the Nuclear localization signal motif. Acidic residues predominate over residues 346–376 (AIEDDDDDYDEEGEEADEEGEEEGDEENDPD). The disordered stretch occupies residues 346-391 (AIEDDDDDYDEEGEEADEEGEEEGDEENDPDYDPKKDQNPAECKQQ). Glutamate 359 and glutamate 360 each carry 5-glutamyl polyglycine. Residues 377-391 (YDPKKDQNPAECKQQ) are compositionally biased toward basic and acidic residues. Cysteine 388 carries the cysteine methyl ester modification. The S-farnesyl cysteine moiety is linked to residue cysteine 388. A propeptide spans 389 to 391 (KQQ) (removed in mature form).

This sequence belongs to the nucleosome assembly protein (NAP) family. Homodimer. The dimer binds strongly and sequentially to single and double H2A-H2B heterodimers. Interacts with ERCC6; this interaction increases ERCC6 processivity. Interacts with RAD54. Interacts with SETD1A. Post-translationally, polyglycylated by TTLL10 on glutamate residues, resulting in polyglycine chains on the gamma-carboxyl group. Both polyglutamylation and polyglycylation modifications can coexist on the same protein on adjacent residues, and lowering polyglycylation levels increases polyglutamylation, and reciprocally. In terms of processing, polyglutamylated by TTLL4 on glutamate residues, resulting in polyglutamate chains on the gamma-carboxyl group. Both polyglutamylation and polyglycylation modifications can coexist on the same protein on adjacent residues, and lowering polyglycylation levels increases polyglutamylation, and reciprocally.

The protein localises to the nucleus. Its subcellular location is the melanosome. It localises to the cytoplasm. Histone chaperone that plays a role in the nuclear import of H2A-H2B and nucleosome assembly. Also participates in several important DNA repair mechanisms: greatly enhances ERCC6-mediated chromatin remodeling which is essential for transcription-coupled nucleotide excision DNA repair. Also stimulates homologous recombination (HR) by RAD51 and RAD54 which is essential in mitotic DNA double strand break (DSB) repair. Plays a key role in the regulation of embryonic neurogenesis. Promotes the proliferation of neural progenitors and inhibits neuronal differentiation during cortical development. Regulates neurogenesis via the modulation of RASSF10; regulates RASSF10 expression by promoting SETD1A-mediated H3K4 methylation at the RASSF10 promoter. This is Nucleosome assembly protein 1-like 1 (NAP1L1) from Pongo abelii (Sumatran orangutan).